Here is a 157-residue protein sequence, read N- to C-terminus: Peptide methionine sulfoxide reductase MsrA (157 aa).

Cys-10 is a catalytic residue.

Belongs to the MsrA Met sulfoxide reductase family.

The enzyme catalyses L-methionyl-[protein] + [thioredoxin]-disulfide + H2O = L-methionyl-(S)-S-oxide-[protein] + [thioredoxin]-dithiol. It catalyses the reaction [thioredoxin]-disulfide + L-methionine + H2O = L-methionine (S)-S-oxide + [thioredoxin]-dithiol. Functionally, has an important function as a repair enzyme for proteins that have been inactivated by oxidation. Catalyzes the reversible oxidation-reduction of methionine sulfoxide in proteins to methionine. This is Peptide methionine sulfoxide reductase MsrA from Clostridium perfringens (strain SM101 / Type A).